The sequence spans 531 residues: Histone-arginine methyltransferase CARMER (531 aa).

The 310-residue stretch at 141-450 (ASQYFQFYGY…QSYDVTIDLH (310 aa)) folds into the SAM-dependent MTase PRMT-type domain. S-adenosyl-L-methionine-binding residues include Q154, R163, G187, E209, E238, and T266. R501 is subject to Asymmetric dimethylarginine; by autocatalysis.

It belongs to the class I-like SAM-binding methyltransferase superfamily. Protein arginine N-methyltransferase family. In terms of assembly, homodimer. The dimethylated protein is the major form.

It localises to the cytoplasm. The protein resides in the nucleus. The catalysed reaction is L-arginyl-[protein] + 2 S-adenosyl-L-methionine = N(omega),N(omega)-dimethyl-L-arginyl-[protein] + 2 S-adenosyl-L-homocysteine + 2 H(+). In terms of biological role, methylates (mono- and asymmetric dimethylation) the guanidino nitrogens of arginyl residues in proteins. May methylate histone H3 at 'Arg-17' and activate transcription via chromatin remodeling. The polypeptide is Histone-arginine methyltransferase CARMER (Art4) (Drosophila persimilis (Fruit fly)).